A 637-amino-acid polypeptide reads, in one-letter code: PTS system mannitol-specific EIICBA component (637 aa).

Topologically, residues 1–23 (MSSDIKIKVQSFGRFLSNMVMPN) are cytoplasmic. A PTS EIIC type-2 domain is found at 12 to 341 (FGRFLSNMVM…ILLKTSKVKE (330 aa)). The chain crosses the membrane as a helical span at residues 24 to 45 (IGAFIAWGIITALFIPTGWLPN). Residues 46 to 49 (ETLA) are Periplasmic-facing. Residues 50 to 70 (KLVGPMITYLLPLLIGYTGGK) traverse the membrane as a helical segment. The Cytoplasmic portion of the chain corresponds to 71–133 (LVGGERGGVV…SGFEMLVNNF (63 aa)). Residues 134–155 (SAGIIGMILAILAFLGIGPIVE) form a helical membrane-spanning segment. The Periplasmic portion of the chain corresponds to 156–164 (ALSKMLAAG). The chain crosses the membrane as a helical span at residues 165-185 (VNFMVVHDMLPLASIFVEPAK). Over 186–272 (ILFLNNAINH…VLMNPRLILA (87 aa)) the chain is Cytoplasmic. Residues 273–292 (VILGGMTGVFTLTILGGGLV) traverse the membrane as a helical segment. Topologically, residues 293–312 (SPASPGSILAVLAMTPKGAY) are periplasmic. Residues 313–334 (FANIAGVCAAMAVSFVVSAILL) form a helical membrane-spanning segment. Over 335–637 (KTSKVKEEDD…EVLELLAGRK (303 aa)) the chain is Cytoplasmic. The 96-residue stretch at 378–473 (RKIIVACDAG…RLVAAQRHTA (96 aa)) folds into the PTS EIIB type-2 domain. The active-site Phosphocysteine intermediate; for EIIB activity is the cysteine 384. At cysteine 384 the chain carries Phosphocysteine; by EIIA. Residues 494 to 636 (FKLGAENIFL…DEVLELLAGR (143 aa)) form the PTS EIIA type-2 domain. Histidine 554 serves as the catalytic Tele-phosphohistidine intermediate; for EIIA activity. A Phosphohistidine; by HPr modification is found at histidine 554.

Homodimer. An intramolecular phosphotransfer takes places between His-554 and Cys-384.

Its subcellular location is the cell inner membrane. It catalyses the reaction D-mannitol(out) + N(pros)-phospho-L-histidyl-[protein] = D-mannitol 1-phosphate(in) + L-histidyl-[protein]. Functionally, the phosphoenolpyruvate-dependent sugar phosphotransferase system (sugar PTS), a major carbohydrate active transport system, catalyzes the phosphorylation of incoming sugar substrates concomitantly with their translocation across the cell membrane. This system is involved in D-mannitol transport. Also able to use D-mannonic acid. The protein is PTS system mannitol-specific EIICBA component of Escherichia coli (strain K12).